Consider the following 64-residue polypeptide: Alpha-conotoxin CnIL (64 aa).

The signal sequence occupies residues 1–21 (MGMRMMFTVFLLVVLTTTVVS). A propeptide spanning residues 22–49 (FPSDSASDGRDDEAKDERSDIYESKRDG) is cleaved from the precursor. Intrachain disulfides connect Cys51–Cys56 and Cys52–Cys62. Position 62 is a cysteine amide (Cys62).

Belongs to the conotoxin A superfamily. Expressed by the venom duct.

The protein localises to the secreted. This is Alpha-conotoxin CnIL from Conus consors (Singed cone).